Reading from the N-terminus, the 434-residue chain is 3-isopropylmalate dehydratase large subunit 1 (434 aa).

The [4Fe-4S] cluster site is built by Cys-308, Cys-368, and Cys-371.

This sequence belongs to the aconitase/IPM isomerase family. LeuC type 2 subfamily. As to quaternary structure, heterodimer of LeuC and LeuD. [4Fe-4S] cluster is required as a cofactor.

It catalyses the reaction (2R,3S)-3-isopropylmalate = (2S)-2-isopropylmalate. It functions in the pathway amino-acid biosynthesis; L-leucine biosynthesis; L-leucine from 3-methyl-2-oxobutanoate: step 2/4. Its function is as follows. Catalyzes the isomerization between 2-isopropylmalate and 3-isopropylmalate, via the formation of 2-isopropylmaleate. The protein is 3-isopropylmalate dehydratase large subunit 1 of Deinococcus radiodurans (strain ATCC 13939 / DSM 20539 / JCM 16871 / CCUG 27074 / LMG 4051 / NBRC 15346 / NCIMB 9279 / VKM B-1422 / R1).